The sequence spans 528 residues: Gamma-taxilin (528 aa).

Residues 1-10 (MATRVEEAAR) show a composition bias toward basic and acidic residues. The tract at residues 1–36 (MATRVEEAARGRGGGAEEATEAGRGGRRRSPRQKFE) is disordered. Omega-N-methylarginine is present on residues Arg12 and Arg24. Ser79, Ser86, Ser97, and Ser105 each carry phosphoserine. The segment at 102–130 (TQESREEIPGGEARTDPPDGQQDSECNRN) is disordered. The span at 104–118 (ESREEIPGGEARTDP) shows a compositional bias: basic and acidic residues. Residues 153 to 464 (EEKLAALCKK…LKEQVSIKAA (312 aa)) adopt a coiled-coil conformation. Tyr283 is subject to Phosphotyrosine. Positions 486–528 (HKELNTSSKRALGAHLEAEPKSQRSAVQKPPSTGSAPAIESVD) are disordered. A compositionally biased stretch (polar residues) spans 508-520 (QRSAVQKPPSTGS). Position 517 is a phosphoserine (Ser517).

The protein belongs to the taxilin family. As to quaternary structure, binds to the C-terminal coiled coil region of syntaxin family members STX1A, STX3A and STX4A. Forms a heterodimer with ATF4 in osteoblasts. Ubiquitously expressed. Expressed at high level in heart and skeletal muscle. Expressed in brain, placenta, lung, liver, kidney and pancreas.

The protein resides in the nucleus membrane. The protein localises to the cytoplasm. It is found in the cytosol. In terms of biological role, may be involved in intracellular vesicle traffic. Inhibits ATF4-mediated transcription, possibly by dimerizing with ATF4 to form inactive dimers that cannot bind DNA. May be involved in regulating bone mass density through an ATF4-dependent pathway. May be involved in cell cycle progression. The chain is Gamma-taxilin (TXLNG) from Homo sapiens (Human).